Reading from the N-terminus, the 77-residue chain is Protein OPG128 (77 aa).

It belongs to the orthopoxvirus OPG128 family. Interacts with sulfhydryl oxidase OPG072; this interaction involves formation of a transient disulfide-bonded intermediate, allowing disulfide bond transfer. Interacts with OPG088; this interaction involves formation of a transient disulfide-bonded intermediate, allowing disulfide bond transfer.

Functionally, late protein which probably participates in disulfide bond formation by functioning as a thiol-disulfide transfer protein between membrane-associated OPG072 and OPG08. The complete pathway for formation of disulfide bonds in intracellular virion membrane proteins sequentially involves oxidation of OPG072, OPG128 and OPG08. In Monkeypox virus, this protein is Protein OPG128 (OPG128).